We begin with the raw amino-acid sequence, 867 residues long: Alanine--tRNA ligase (867 aa).

Zn(2+) contacts are provided by His-554, His-558, Cys-656, and His-660.

The protein belongs to the class-II aminoacyl-tRNA synthetase family. The cofactor is Zn(2+).

The protein localises to the cytoplasm. The catalysed reaction is tRNA(Ala) + L-alanine + ATP = L-alanyl-tRNA(Ala) + AMP + diphosphate. In terms of biological role, catalyzes the attachment of alanine to tRNA(Ala) in a two-step reaction: alanine is first activated by ATP to form Ala-AMP and then transferred to the acceptor end of tRNA(Ala). Also edits incorrectly charged Ser-tRNA(Ala) and Gly-tRNA(Ala) via its editing domain. The protein is Alanine--tRNA ligase of Methylococcus capsulatus (strain ATCC 33009 / NCIMB 11132 / Bath).